The sequence spans 161 residues: Endoribonuclease YbeY (161 aa).

Residues histidine 121, histidine 125, and histidine 131 each contribute to the Zn(2+) site.

It belongs to the endoribonuclease YbeY family. Requires Zn(2+) as cofactor.

The protein localises to the cytoplasm. In terms of biological role, single strand-specific metallo-endoribonuclease involved in late-stage 70S ribosome quality control and in maturation of the 3' terminus of the 16S rRNA. The sequence is that of Endoribonuclease YbeY from Xylella fastidiosa (strain M23).